The sequence spans 171 residues: S-ribosylhomocysteine lyase (171 aa).

Residues H54, H58, and C128 each contribute to the Fe cation site.

Belongs to the LuxS family. In terms of assembly, homodimer. Fe cation serves as cofactor.

It carries out the reaction S-(5-deoxy-D-ribos-5-yl)-L-homocysteine = (S)-4,5-dihydroxypentane-2,3-dione + L-homocysteine. Its function is as follows. Involved in the synthesis of autoinducer 2 (AI-2) which is secreted by bacteria and is used to communicate both the cell density and the metabolic potential of the environment. The regulation of gene expression in response to changes in cell density is called quorum sensing. Catalyzes the transformation of S-ribosylhomocysteine (RHC) to homocysteine (HC) and 4,5-dihydroxy-2,3-pentadione (DPD). This Shigella flexneri protein is S-ribosylhomocysteine lyase.